The chain runs to 436 residues: GDP-mannose 6-dehydrogenase (436 aa).

NAD(+)-binding residues include Y10, V11, D30, K35, T86, and T124. The GDP-alpha-D-mannuronate site is built by E161, K210, N214, H217, N225, Y256, Y257, R259, F262, and G265. The active-site Nucleophile is the C268. Residue K271 coordinates NAD(+). The interval 278–295 is inter-domain linker; the sequence is YRASQLDVEHPMLGSLMR. A GDP-alpha-D-mannuronate-binding site is contributed by K324. R331 contacts NAD(+).

The protein belongs to the UDP-glucose/GDP-mannose dehydrogenase family. In terms of assembly, forms a domain-swapped dimer with each peptide contributing to each active site. The dimers assemble further. X-ray structures indicate this enzyme exists as a homotetramer PubMed:12705829, but kinetic and physical results obtained in PubMed:2470755 and PubMed:12135385 indicate that it is probably a homohexamer.

The catalysed reaction is GDP-alpha-D-mannose + 2 NAD(+) + H2O = GDP-alpha-D-mannuronate + 2 NADH + 3 H(+). It participates in glycan biosynthesis; alginate biosynthesis. Inhibited by GMP, ATP, GDP-D-glucose and maltose. Inhibited by GMP and deamidoNAD. Its function is as follows. Catalyzes the oxidation of guanosine diphospho-D-mannose (GDP-D-mannose) to GDP-D-mannuronic acid, a precursor for alginate polymerization. The alginate layer causes a mucoid phenotype and provides a protective barrier against host immune defenses and antibiotics. Other sugars are not used as substrates. The polypeptide is GDP-mannose 6-dehydrogenase (Pseudomonas aeruginosa (strain ATCC 15692 / DSM 22644 / CIP 104116 / JCM 14847 / LMG 12228 / 1C / PRS 101 / PAO1)).